Consider the following 527-residue polypeptide: Bifunctional purine biosynthesis protein PurH (527 aa).

One can recognise an MGS-like domain in the interval 1-149; sequence MASDFLPVHR…KNFARVAVAT (149 aa).

The protein belongs to the PurH family.

The catalysed reaction is (6R)-10-formyltetrahydrofolate + 5-amino-1-(5-phospho-beta-D-ribosyl)imidazole-4-carboxamide = 5-formamido-1-(5-phospho-D-ribosyl)imidazole-4-carboxamide + (6S)-5,6,7,8-tetrahydrofolate. The enzyme catalyses IMP + H2O = 5-formamido-1-(5-phospho-D-ribosyl)imidazole-4-carboxamide. It participates in purine metabolism; IMP biosynthesis via de novo pathway; 5-formamido-1-(5-phospho-D-ribosyl)imidazole-4-carboxamide from 5-amino-1-(5-phospho-D-ribosyl)imidazole-4-carboxamide (10-formyl THF route): step 1/1. The protein operates within purine metabolism; IMP biosynthesis via de novo pathway; IMP from 5-formamido-1-(5-phospho-D-ribosyl)imidazole-4-carboxamide: step 1/1. This chain is Bifunctional purine biosynthesis protein PurH, found in Xylella fastidiosa (strain 9a5c).